The following is a 1059-amino-acid chain: Isoleucine--tRNA ligase (1059 aa).

Residues 47 to 57 (PYTSGQMHLGT) carry the 'HIGH' region motif. The short motif at 606–610 (KMSKS) is the 'KMSKS' region element. Lysine 609 contributes to the ATP binding site.

It belongs to the class-I aminoacyl-tRNA synthetase family. IleS type 2 subfamily. In terms of assembly, monomer. Zn(2+) is required as a cofactor.

Its subcellular location is the cytoplasm. The enzyme catalyses tRNA(Ile) + L-isoleucine + ATP = L-isoleucyl-tRNA(Ile) + AMP + diphosphate. Functionally, catalyzes the attachment of isoleucine to tRNA(Ile). As IleRS can inadvertently accommodate and process structurally similar amino acids such as valine, to avoid such errors it has two additional distinct tRNA(Ile)-dependent editing activities. One activity is designated as 'pretransfer' editing and involves the hydrolysis of activated Val-AMP. The other activity is designated 'posttransfer' editing and involves deacylation of mischarged Val-tRNA(Ile). The polypeptide is Isoleucine--tRNA ligase (Haloquadratum walsbyi (strain DSM 16790 / HBSQ001)).